Consider the following 64-residue polypeptide: Large ribosomal subunit protein uL29 (64 aa).

It belongs to the universal ribosomal protein uL29 family.

The polypeptide is Large ribosomal subunit protein uL29 (Solidesulfovibrio magneticus (strain ATCC 700980 / DSM 13731 / RS-1) (Desulfovibrio magneticus)).